Reading from the N-terminus, the 399-residue chain is Phosphoglycerate kinase (399 aa).

Substrate is bound by residues Asp-22 to Asn-24, Arg-38, His-61 to Arg-64, Arg-120, and Arg-153. ATP contacts are provided by residues Lys-204, Glu-326, and Gly-352–Thr-355.

It belongs to the phosphoglycerate kinase family. Monomer.

It localises to the cytoplasm. The enzyme catalyses (2R)-3-phosphoglycerate + ATP = (2R)-3-phospho-glyceroyl phosphate + ADP. It functions in the pathway carbohydrate degradation; glycolysis; pyruvate from D-glyceraldehyde 3-phosphate: step 2/5. The protein is Phosphoglycerate kinase of Geotalea uraniireducens (strain Rf4) (Geobacter uraniireducens).